Reading from the N-terminus, the 497-residue chain is MSGALLVAGTSSDAGKSVVVAGLCRLLARRGVRVAPFKAQNMSNNSAVTVEGGEIGRAQAIQARAAGLEPSVRFNPILLKPGSDRTSQLVIKGQVAESVTATSYVQHRDRLAALVLNELTCLRDEFDAVICEGAGSPAEINLRATDLANMGLARAADLAVILVGDIDRGGLLAHLFGTVAVLDPQDQALIAGFVVNKFRGDPALLQPGLRRLHDITGRPTYGVLPYADRLWLDAEDSLSVLAHRVVGAPDPPLGDDWLRVAAVRLPRISNSTDVEALACEPGVLVRWVSEPSDVADADLVVIPGSKATVADLSWLRERGLAAAITAHAAAGRPVLGICGGFQMLCRRIDDRVESGAGEVAGLGLLDADIAFHPAKTLRRWQRPLAGYEIHHGRVSRCAEHSWFDSDAEPQGLVRGAVFGTHWHGLLDNDDFRRAWLVRVADAAGRRFVPGDTDVAARRDAQLDLAADLLAAHLDVDAVLGLLDGPPPRPRLATRLCR.

A GATase cobBQ-type domain is found at 257–431 (WLRVAAVRLP…WHGLLDNDDF (175 aa)). The active-site Nucleophile is cysteine 338. Histidine 423 is a catalytic residue.

The protein belongs to the CobB/CobQ family. CobQ subfamily.

It functions in the pathway cofactor biosynthesis; adenosylcobalamin biosynthesis. Its function is as follows. Catalyzes amidations at positions B, D, E, and G on adenosylcobyrinic A,C-diamide. NH(2) groups are provided by glutamine, and one molecule of ATP is hydrogenolyzed for each amidation. This Mycolicibacterium paratuberculosis (strain ATCC BAA-968 / K-10) (Mycobacterium paratuberculosis) protein is Cobyric acid synthase.